A 227-amino-acid polypeptide reads, in one-letter code: Enolase-phosphatase E1 (227 aa).

This sequence belongs to the HAD-like hydrolase superfamily. MasA/MtnC family. In terms of assembly, monomer. The cofactor is Mg(2+).

It carries out the reaction 5-methylsulfanyl-2,3-dioxopentyl phosphate + H2O = 1,2-dihydroxy-5-(methylsulfanyl)pent-1-en-3-one + phosphate. It participates in amino-acid biosynthesis; L-methionine biosynthesis via salvage pathway; L-methionine from S-methyl-5-thio-alpha-D-ribose 1-phosphate: step 3/6. It functions in the pathway amino-acid biosynthesis; L-methionine biosynthesis via salvage pathway; L-methionine from S-methyl-5-thio-alpha-D-ribose 1-phosphate: step 4/6. Functionally, bifunctional enzyme that catalyzes the enolization of 2,3-diketo-5-methylthiopentyl-1-phosphate (DK-MTP-1-P) into the intermediate 2-hydroxy-3-keto-5-methylthiopentenyl-1-phosphate (HK-MTPenyl-1-P), which is then dephosphorylated to form the acireductone 1,2-dihydroxy-3-keto-5-methylthiopentene (DHK-MTPene). The protein is Enolase-phosphatase E1 of Persephonella marina (strain DSM 14350 / EX-H1).